The primary structure comprises 353 residues: Draxin-B (353 aa).

An N-terminal signal peptide occupies residues 1 to 21 (MASSWCLPLALLVSNLAVSHS). 3 disordered regions span residues 23–183 (EPSS…KEGS), 198–222 (TVMSEHPPMLPPASTKPKKSGRGKV), and 246–268 (VDAWPSSRKKDKRRSKNLSSGNV). Residues 138 to 167 (GPHKGKAQGHGHHFDHRRHGGRRDKGRHTK) show a composition bias toward basic residues. Over residues 252 to 261 (SRKKDKRRSK) the composition is skewed to basic residues. N-linked (GlcNAc...) asparagine glycosylation is found at asparagine 262 and asparagine 267.

Belongs to the draxin family.

Its subcellular location is the secreted. In terms of biological role, chemorepulsive axon guidance protein required for the development of spinal cord and forebrain commissures. Acts as a chemorepulsive guidance protein for commissural axons during development. Able to inhibit or repel neurite outgrowth from dorsal spinal cord. This is Draxin-B (draxin-B) from Salmo salar (Atlantic salmon).